The chain runs to 92 residues: Small ribosomal subunit protein uS19 (92 aa).

Belongs to the universal ribosomal protein uS19 family.

Protein S19 forms a complex with S13 that binds strongly to the 16S ribosomal RNA. In Rippkaea orientalis (strain PCC 8801 / RF-1) (Cyanothece sp. (strain PCC 8801)), this protein is Small ribosomal subunit protein uS19.